A 309-amino-acid polypeptide reads, in one-letter code: Ribosomal RNA small subunit methyltransferase H (309 aa).

S-adenosyl-L-methionine-binding positions include 44 to 46 (GGH), Asp-62, Phe-102, Asp-118, and Gln-125. Positions 289-309 (LEQQRNSRARSAKLRVAARSS) are disordered.

The protein belongs to the methyltransferase superfamily. RsmH family.

Its subcellular location is the cytoplasm. It carries out the reaction cytidine(1402) in 16S rRNA + S-adenosyl-L-methionine = N(4)-methylcytidine(1402) in 16S rRNA + S-adenosyl-L-homocysteine + H(+). Its function is as follows. Specifically methylates the N4 position of cytidine in position 1402 (C1402) of 16S rRNA. The sequence is that of Ribosomal RNA small subunit methyltransferase H from Synechococcus sp. (strain JA-3-3Ab) (Cyanobacteria bacterium Yellowstone A-Prime).